The sequence spans 547 residues: Putative laccase-5 (547 aa).

The signal sequence occupies residues 1-35 (MGTPRGLRNAGSSSSACRFLAAFAVLLALPTLTAG). Plastocyanin-like domains are found at residues 43 to 159 (NVQM…PKRG) and 170 to 323 (ELPP…YAPT). 2 N-linked (GlcNAc...) asparagine glycosylation sites follow: asparagine 48 and asparagine 89. Residues histidine 93, histidine 95, histidine 138, and histidine 140 each contribute to the Cu cation site. N-linked (GlcNAc...) asparagine glycosylation is found at asparagine 199, asparagine 215, asparagine 251, asparagine 311, asparagine 342, asparagine 349, asparagine 388, asparagine 395, asparagine 405, and asparagine 430. One can recognise a Plastocyanin-like 3 domain in the interval 408 to 531 (FVRPRVALLE…SMAWLVNDGP (124 aa)). Cu cation is bound by residues histidine 448, histidine 451, histidine 453, histidine 510, cysteine 511, histidine 512, and histidine 516.

The protein belongs to the multicopper oxidase family. The cofactor is Cu cation.

The protein localises to the secreted. It is found in the extracellular space. Its subcellular location is the apoplast. It carries out the reaction 4 hydroquinone + O2 = 4 benzosemiquinone + 2 H2O. Its function is as follows. Lignin degradation and detoxification of lignin-derived products. This is Putative laccase-5 (LAC5) from Oryza sativa subsp. japonica (Rice).